Consider the following 798-residue polypeptide: Integrin beta-7 (798 aa).

The first 19 residues, 1–19, serve as a signal peptide directing secretion; the sequence is MVALPMVLVLLLVLSRGES. Residues 20-723 lie on the Extracellular side of the membrane; that stretch reads ELDAKIPSTG…VRPQEKGADH (704 aa). Residues 44 to 92 enclose the PSI domain; sequence SCQPAPSCQKCILSHPSCAWCKQLNFTASGEAEARRCARREELLARGCP. 7 disulfides stabilise this stretch: C51-C476, C54-C80, C64-C91, C216-C223, C271-C311, C412-C428, and C448-C474. The N-linked (GlcNAc...) asparagine glycan is linked to N68. Residues 98–124 form a disordered region; the sequence is EPRGQQEVLQDQPLSQGARGEGATQLA. In terms of domain architecture, VWFA spans 150-389; that stretch reads YPVDLYYLMD…QLIMDAYNSL (240 aa). Mg(2+)-binding residues include S161 and S163. 4 residues coordinate Ca(2+): S163, D166, D167, and D198. 4 residues coordinate Ca(2+): N254, D256, P258, and E259. E259 is a Mg(2+) binding site. N279 carries an N-linked (GlcNAc...) asparagine glycan. Ca(2+)-binding residues include D289 and E373. N434 carries N-linked (GlcNAc...) asparagine glycosylation. An N-linked (GlcNAc...) asparagine glycan is attached at N477. Cystine bridges form between C478–C497, C488–C500, C502–C511, C513–C545, C527–C543, C537–C548, C550–C559, C561–C582, C566–C580, C574–C585, C587–C596, C598–C621, C605–C619, C613–C624, C626–C635, C638–C641, C645–C688, C651–C670, and C654–C666. I-EGF domains follow at residues 478–512, 513–560, 561–597, and 598–636; these read CSDT…RLCE, CSVA…HLCE, CDDA…RACE, and CSGD…ALCD. A glycan (N-linked (GlcNAc...) asparagine) is linked at N531. N590 carries an N-linked (GlcNAc...) asparagine glycan. N-linked (GlcNAc...) asparagine glycosylation is found at N665 and N674. The helical transmembrane segment at 724–746 threads the bilayer; it reads TQAIVLGCVGGIVAVGLGLVLAY. The Cytoplasmic portion of the chain corresponds to 747–798; it reads RLSVEIYDRREYSRFEKEQQQLNWKQDSNPLYKSAITTTINPRFQEADSPTL. The residue at position 778 (Y778) is a Phosphotyrosine; by Tyr-kinases.

This sequence belongs to the integrin beta chain family. In terms of assembly, heterodimer of an alpha and a beta subunit. ITGB7/beta-7 associates with either ITGA4/alpha-4 or ITGAE/alpha-E. Integrin ITGA4/ITGB7 interacts with MADCAM1. Integrin ITGA4/ITGB7 interacts with VCAM1 and fibronectin. Interacts with FLNA (via filamin repeats 4, 9, 12, 17, 19, 21, and 23). As to quaternary structure, (Microbial infection) May interact with HIV-1 gp120. As to expression, expressed in a variety of leukocyte lines.

Its subcellular location is the cell membrane. In terms of biological role, integrin ITGA4/ITGB7 (alpha-4/beta-7) (Peyer patches-specific homing receptor LPAM-1) is an adhesion molecule that mediates lymphocyte migration and homing to gut-associated lymphoid tissue (GALT). Integrin ITGA4/ITGB7 interacts with the cell surface adhesion molecules MADCAM1 which is normally expressed by the vascular endothelium of the gastrointestinal tract. Also interacts with VCAM1 and fibronectin, an extracellular matrix component. It recognizes one or more domains within the alternatively spliced CS-1 region of fibronectin. Interactions involve the tripeptide L-D-T in MADCAM1, and L-D-V in fibronectin. Integrin ITGAE/ITGB7 (alpha-E/beta-7, HML-1) is a receptor for E-cadherin. Functionally, (Microbial infection) Binds to HIV-1 gp120, thereby allowing the virus to enter GALT, which is thought to be the major trigger of AIDS disease. Interaction would involve a tripeptide L-D-I in HIV-1 gp120. The polypeptide is Integrin beta-7 (ITGB7) (Homo sapiens (Human)).